The primary structure comprises 300 residues: Mycothiol acetyltransferase (300 aa).

N-acetyltransferase domains lie at 4–140 (IDWR…RPLT) and 151–300 (VRLA…AVAD). A 1D-myo-inositol 2-(L-cysteinylamino)-2-deoxy-alpha-D-glucopyranoside-binding site is contributed by D36. Acetyl-CoA is bound at residue 79–81 (LVV). Residues E178, K219, and E227 each contribute to the 1D-myo-inositol 2-(L-cysteinylamino)-2-deoxy-alpha-D-glucopyranoside site. Residue 231-233 (VGV) participates in acetyl-CoA binding. Y269 lines the 1D-myo-inositol 2-(L-cysteinylamino)-2-deoxy-alpha-D-glucopyranoside pocket. 274-279 (NGAAVK) is a binding site for acetyl-CoA.

The protein belongs to the acetyltransferase family. MshD subfamily. In terms of assembly, monomer.

The enzyme catalyses 1D-myo-inositol 2-(L-cysteinylamino)-2-deoxy-alpha-D-glucopyranoside + acetyl-CoA = mycothiol + CoA + H(+). Its function is as follows. Catalyzes the transfer of acetyl from acetyl-CoA to desacetylmycothiol (Cys-GlcN-Ins) to form mycothiol. The sequence is that of Mycothiol acetyltransferase from Mycobacterium sp. (strain MCS).